A 137-amino-acid polypeptide reads, in one-letter code: Small ribosomal subunit protein uS12 (137 aa).

The interval 1–57 (MPTINQLVRKPRKSKVEKSKSPALNVGYNSLKRVPTNESAPQKRGVATRVGTMTPKK) is disordered. 3-methylthioaspartic acid is present on Asp-102.

It belongs to the universal ribosomal protein uS12 family. In terms of assembly, part of the 30S ribosomal subunit. Contacts proteins S8 and S17. May interact with IF1 in the 30S initiation complex.

Functionally, with S4 and S5 plays an important role in translational accuracy. Interacts with and stabilizes bases of the 16S rRNA that are involved in tRNA selection in the A site and with the mRNA backbone. Located at the interface of the 30S and 50S subunits, it traverses the body of the 30S subunit contacting proteins on the other side and probably holding the rRNA structure together. The combined cluster of proteins S8, S12 and S17 appears to hold together the shoulder and platform of the 30S subunit. The chain is Small ribosomal subunit protein uS12 from Streptococcus gordonii (strain Challis / ATCC 35105 / BCRC 15272 / CH1 / DL1 / V288).